A 332-amino-acid chain; its full sequence is D-lactate dehydrogenase (332 aa).

NAD(+)-binding positions include 155–156, D175, 206–207, N212, and 233–235; these read RI, VP, and FAR. Residues R235 and E264 contribute to the active site. The active-site Proton donor is H296.

It belongs to the D-isomer specific 2-hydroxyacid dehydrogenase family. Homodimer.

The catalysed reaction is (R)-lactate + NAD(+) = pyruvate + NADH + H(+). The polypeptide is D-lactate dehydrogenase (Lactiplantibacillus pentosus (Lactobacillus pentosus)).